The following is a 476-amino-acid chain: Stromelysin-2 (476 aa).

Residues 1 to 17 form the signal peptide; the sequence is MEPLAILALLSLPICSA. Positions 18 to 99 are cleaved as a propeptide — activation peptide; sequence YPLHGAVTQG…PRCGVPDVGG (82 aa). The short motif at 90–97 is the Cysteine switch element; that stretch reads PRCGVPDV. Positions 92, 168, 170, 183, 196, and 218 each coordinate Zn(2+). Residue E219 is part of the active site. H222 and H228 together coordinate Zn(2+). Hemopexin repeat units lie at residues 286 to 335, 336 to 382, 384 to 432, and 433 to 476; these read PDKC…WPTL, PSDL…GFPP, VKKI…FPGI, and EPQV…WLLC. C289 and C476 are oxidised to a cystine.

This sequence belongs to the peptidase M10A family. The cofactor is Zn(2+). Ca(2+) is required as a cofactor. In terms of tissue distribution, expressed in small intestine. Weak levels in heart and lung.

The protein resides in the secreted. It is found in the extracellular space. It localises to the extracellular matrix. The enzyme catalyses Similar to stromelysin 1, but action on collagen types III, IV and V is weak.. Functionally, can degrade fibronectin, gelatins of type I, III, IV, and V; weakly collagens III, IV, and V. Activates procollagenase. The polypeptide is Stromelysin-2 (Mmp10) (Mus musculus (Mouse)).